A 311-amino-acid polypeptide reads, in one-letter code: MEPFADALFWVGAVTVLWLSVSSLWSLINGIRVWILGNGNLMRASSLGKWAVVTGATDGIGKAYAEELARRGFAIVLISRTQEKLDEVSKAIESKYKVETKTISADFGSVDIYPKIESGLAGLEIGVLVNNVGVSYSYPEFFLNIPDVDSFINNMININIMSVCQMTRLVLPRMVDRSKGVILNVASASGMYPVPLLTLYSSTKAFVDFFSRGLDAEYKSKGIIIQSVLPFYVTTKLSKIRKPTLDIPTPERYVKAQLSTIGLQTQSNGYLPHAIMGWVTASLLPAKLLNKYVMGMGLSQRARYLKKQKQG.

A helical membrane pass occupies residues 8–28 (LFWVGAVTVLWLSVSSLWSLI). 48–77 (GKWAVVTGATDGIGKAYAEELARRGFAIVL) contributes to the NADP(+) binding site. The chain crosses the membrane as a helical span at residues 125–145 (IGVLVNNVGVSYSYPEFFLNI). S187 contacts substrate. Catalysis depends on Y200, which acts as the Proton acceptor. Residues 269 to 289 (GYLPHAIMGWVTASLLPAKLL) traverse the membrane as a helical segment.

It belongs to the short-chain dehydrogenases/reductases (SDR) family. 17-beta-HSD 3 subfamily.

The protein resides in the endoplasmic reticulum membrane. The catalysed reaction is a very-long-chain (3R)-3-hydroxyacyl-CoA + NADP(+) = a very-long-chain 3-oxoacyl-CoA + NADPH + H(+). It carries out the reaction 17beta-estradiol + NAD(+) = estrone + NADH + H(+). The enzyme catalyses 17beta-estradiol + NADP(+) = estrone + NADPH + H(+). It participates in lipid metabolism; fatty acid biosynthesis. The protein operates within steroid biosynthesis; estrogen biosynthesis. Its function is as follows. Catalyzes the second of the four reactions of the long-chain fatty acids elongation cycle. This endoplasmic reticulum-bound enzymatic process, allows the addition of two carbons to the chain of long- and very long-chain fatty acids/VLCFAs per cycle. This enzyme has a 3-ketoacyl-CoA reductase activity, reducing 3-ketoacyl-CoA to 3-hydroxyacyl-CoA, within each cycle of fatty acid elongation. Thereby, it may participate in the production of VLCFAs of different chain lengths that are involved in multiple biological processes as precursors of membrane lipids and lipid mediators. May also catalyze the transformation of estrone (E1) into estradiol (E2) and play a role in estrogen formation. This Danio rerio (Zebrafish) protein is Very-long-chain 3-oxoacyl-CoA reductase-B (hsd17b12b).